A 205-amino-acid polypeptide reads, in one-letter code: Iron-sulfur assembly protein 2 (205 aa).

The Fe cation site is built by C131, C196, and C198.

Belongs to the HesB/IscA family.

The protein localises to the mitochondrion matrix. Its function is as follows. Involved in the assembly of mitochondrial and cytoplasmic iron-sulfur proteins. Probably involved in the binding of an intermediate of Fe/S cluster assembly. This chain is Iron-sulfur assembly protein 2 (isa2), found in Schizosaccharomyces pombe (strain 972 / ATCC 24843) (Fission yeast).